The following is a 423-amino-acid chain: G2/mitotic-specific cyclin-B1 (423 aa).

A Phosphoserine; by CDK1 modification is found at serine 116. The residue at position 118 (serine 118) is a Phosphoserine. Serine 123 bears the Phosphoserine; by PLK1 mark. Serine 137 bears the Phosphoserine mark. Interaction with CDK2 regions lie at residues 159 to 167 and 248 to 251; these read EYVKDIYAY and YEEM. Position 311 is a phosphothreonine (threonine 311).

The protein belongs to the cyclin family. Cyclin AB subfamily. As to quaternary structure, interacts with the CDC2 protein kinase to form a serine/threonine kinase holoenzyme complex also known as maturation promoting factor (MPF). The cyclin subunit imparts substrate specificity to the complex. Binds HEI10. Interacts with catalytically active RALBP1 and CDC2 during mitosis to form an endocytotic complex during interphase. Interacts with CCNF; interaction is required for nuclear localization. Interacts with CDK5RAP3. Interacts with RFPL4A and UBE2A. Interacts with INCA1. Ubiquitinated by the SCF(NIPA) complex during interphase, leading to its destruction. Deubiquitinated by USP22 during G2/M phase. In terms of processing, phosphorylated by PLK1 at Ser-123 on centrosomes during prophase: phosphorylation by PLK1 does not cause nuclear import. Phosphorylation at Ser-137 was also reported to be mediated by PLK1 but Ser-123 seems to be the primary phosphorylation site.

Its subcellular location is the cytoplasm. It localises to the nucleus. It is found in the cytoskeleton. The protein localises to the microtubule organizing center. The protein resides in the centrosome. Functionally, essential for the control of the cell cycle at the G2/M (mitosis) transition. The protein is G2/mitotic-specific cyclin-B1 (Ccnb1) of Rattus norvegicus (Rat).